We begin with the raw amino-acid sequence, 382 residues long: Zinc metalloproteinase nas-7 (382 aa).

The N-terminal stretch at 1–18 (MLLPWIITIVTVIPATLG) is a signal peptide. A propeptide spanning residues 19-79 (HRNRVQDDEM…DIRLPRRHKR (61 aa)) is cleaved from the precursor. One can recognise a Peptidase M12A domain in the interval 80–273 (NGVSRAAKLW…SKINRMYNCP (194 aa)). 5 disulfides stabilise this stretch: C122–C272, C144–C163, C348–C382, C355–C375, and C362–C379. H171 lines the Zn(2+) pocket. E172 is an active-site residue. The Zn(2+) site is built by H175 and H181. The region spanning 348-382 (CEDRITVCWWTADRCRSPAIYQVMSSLCPKTCKFC) is the ShKT domain.

Zn(2+) serves as cofactor. In terms of tissue distribution, expressed in the head of adult hermaphrodites but not within pharynx cells. Expressed in pharyngeal muscles, mc cells, intestine, hypodermal seam cells, arcade cells, spermatheca, vulva and rectal epithelial cells.

It is found in the secreted. Functionally, metalloprotease. The chain is Zinc metalloproteinase nas-7 (nas-7) from Caenorhabditis elegans.